Reading from the N-terminus, the 1047-residue chain is tRNA wybutosine-synthesizing protein 4 (1047 aa).

S-adenosyl-L-methionine is bound by residues arginine 69, glycine 95, aspartate 122, 169–170 (DL), and glutamate 196. The JmjC domain maps to 814-1003 (GRQYLRSISA…AAGRDVYGNR (190 aa)).

It belongs to the methyltransferase superfamily. LCMT family.

It carries out the reaction 7-[(3S)-3-amino-3-carboxypropyl]wyosine(37) in tRNA(Phe) + S-adenosyl-L-methionine = 7-[(3S)-(3-amino-3-methoxycarbonyl)propyl]wyosine(37) in tRNA(Phe) + S-adenosyl-L-homocysteine. It catalyses the reaction 7-[(3S)-(3-amino-3-methoxycarbonyl)propyl]wyosine(37) in tRNA(Phe) + S-adenosyl-L-methionine + CO2 = wybutosine(37) in tRNA(Phe) + S-adenosyl-L-homocysteine + 2 H(+). It functions in the pathway tRNA modification; wybutosine-tRNA(Phe) biosynthesis. Probable S-adenosyl-L-methionine-dependent methyltransferase that acts as a component of the wybutosine biosynthesis pathway. Wybutosine is a hyper modified guanosine with a tricyclic base found at the 3'-position adjacent to the anticodon of eukaryotic phenylalanine tRNA. May methylate the carboxyl group of leucine residues to form alpha-leucine ester residues. In Aspergillus fumigatus (strain ATCC MYA-4609 / CBS 101355 / FGSC A1100 / Af293) (Neosartorya fumigata), this protein is tRNA wybutosine-synthesizing protein 4 (ppm2).